The following is a 753-amino-acid chain: Probable phosphoenolpyruvate synthase (753 aa).

Residue histidine 398 is the Tele-phosphohistidine intermediate of the active site. Arginine 488, arginine 535, glutamate 631, glycine 653, threonine 654, asparagine 655, and aspartate 656 together coordinate substrate. Glutamate 631 is a binding site for Mg(2+). Aspartate 656 is a binding site for Mg(2+). The active-site Proton donor is the cysteine 703.

Belongs to the PEP-utilizing enzyme family. The cofactor is Mg(2+).

It catalyses the reaction pyruvate + ATP + H2O = phosphoenolpyruvate + AMP + phosphate + 2 H(+). It participates in carbohydrate biosynthesis; gluconeogenesis. Its function is as follows. Catalyzes the phosphorylation of pyruvate to phosphoenolpyruvate. The polypeptide is Probable phosphoenolpyruvate synthase (ppsA) (Archaeoglobus fulgidus (strain ATCC 49558 / DSM 4304 / JCM 9628 / NBRC 100126 / VC-16)).